Consider the following 709-residue polypeptide: MHPALLCGPILAIFLQFLVSSCSPLENDDLFLVQVEPEVDPVVAAEAIGAKYVRPLLNLKYHHLIKLHKGSDDSVQSSIRKRGIDAGILELERQTPRWRYKRDASESDELLNEFSNHFGISDPLFYGQWHIFNSNNPGHDLNLREVWDAGYFGENVTVAFVDDGIDFKHPDLQAAYTSLGSWDFNDNIADPLPKLSDDQHGTRCAGEVAAAWNDVCGVGIAPRAKVAGLRILSAPITDAVESEALNYGFQTNHIYSCSWGPADDGRAMDAPNTATRRALMNGVLNGRNGLGSIFVFASGNGGHYHDNCNFDGYTNSIFSATIGAVDAEHKIPFYSEVCAAQLVSAYSSGSHLSILTTNPEGTCTRSHGGTSAAAPLASAVYALALSIRPDLSWRDIQHITVYSASPFDSPSQNAEWQKTPAGFQFSHHFGFGKLDASKFVEVAKDWQVVNPQTWLIAPEINVNKSFGSVNNETITEMVSEFTVTKDMIEKSNFKRLEHVTVRVCIPFNRRGALEILLESPSGIRSILASERPYDENSKGFLDWTFMTVQHWAEPPEGVWKLLVNDRSGGKHEGTFENWQLALWGESENPSNTAPLPYDTLELPKEMVLGIYSEPNSDLTNSSTLLSPTSTSFTSYTVSATATPTSTSHIPIPTVLPPTQPVLEPSYREIVAFITFFLLFAFIFVAVIWTWISAFWKAKAPPPLSQQEIA.

The first 22 residues, 1–22, serve as a signal peptide directing secretion; that stretch reads MHPALLCGPILAIFLQFLVSSC. 2 consecutive propeptides follow at residues 23 to 82 and 83 to 102; these read SPLE…IRKR and GIDA…RYKR. Residues 103 to 668 are Lumenal-facing; the sequence is DASESDELLN…QPVLEPSYRE (566 aa). A Peptidase S8 domain is found at 128–440; sequence QWHIFNSNNP…FGKLDASKFV (313 aa). An N-linked (GlcNAc...) asparagine glycan is attached at N155. Residues D162 and H200 each act as charge relay system in the active site. Cystine bridges form between C216–C363 and C308–C338. The active-site Charge relay system is S371. The region spanning 449–588 is the P/Homo B domain; it reads VNPQTWLIAP…QLALWGESEN (140 aa). N463, N471, and N620 each carry an N-linked (GlcNAc...) asparagine glycan. Residues 669 to 693 traverse the membrane as a helical segment; the sequence is IVAFITFFLLFAFIFVAVIWTWISA. Over 694–709 the chain is Cytoplasmic; the sequence is FWKAKAPPPLSQQEIA.

Belongs to the peptidase S8 family. Furin subfamily. Ca(2+) is required as a cofactor. Post-translationally, N-glycosylated.

Its subcellular location is the golgi apparatus. The protein localises to the trans-Golgi network membrane. Its function is as follows. Membrane-bound, subtilisin-like serine protease that processes the P-factor precursor and other precursor proteins. Essential for cell viability. Cleaves substrate on the C-terminal side of dibasic residues. The sequence is that of Dibasic-processing endoprotease (krp1) from Schizosaccharomyces pombe (strain 972 / ATCC 24843) (Fission yeast).